The primary structure comprises 199 residues: Recombination protein RecR (199 aa).

The segment at 58 to 73 adopts a C4-type zinc-finger fold; it reads CSVCSNLTDIDPCPLC. Residues 81 to 176 form the Toprim domain; sequence TVICVVQDPR…KATRIAHGIP (96 aa).

Belongs to the RecR family.

May play a role in DNA repair. It seems to be involved in an RecBC-independent recombinational process of DNA repair. It may act with RecF and RecO. The sequence is that of Recombination protein RecR from Ruminiclostridium cellulolyticum (strain ATCC 35319 / DSM 5812 / JCM 6584 / H10) (Clostridium cellulolyticum).